We begin with the raw amino-acid sequence, 66 residues long: Large ribosomal subunit protein bL35 (66 aa).

The segment covering 1–26 (MPKMKTHRGAAKRVKRTGSGKLKRSR) has biased composition (basic residues). Residues 1–49 (MPKMKTHRGAAKRVKRTGSGKLKRSRAFTSHLFANKSTKQKRKLRKASL) form a disordered region.

This sequence belongs to the bacterial ribosomal protein bL35 family.

The protein is Large ribosomal subunit protein bL35 of Staphylococcus saprophyticus subsp. saprophyticus (strain ATCC 15305 / DSM 20229 / NCIMB 8711 / NCTC 7292 / S-41).